A 432-amino-acid chain; its full sequence is Trigger factor (432 aa).

Positions 161–246 (EDRVTIDFTG…LKKVEERGLP (86 aa)) constitute a PPIase FKBP-type domain.

It belongs to the FKBP-type PPIase family. Tig subfamily.

The protein resides in the cytoplasm. It catalyses the reaction [protein]-peptidylproline (omega=180) = [protein]-peptidylproline (omega=0). Involved in protein export. Acts as a chaperone by maintaining the newly synthesized protein in an open conformation. Functions as a peptidyl-prolyl cis-trans isomerase. This is Trigger factor from Salmonella choleraesuis (strain SC-B67).